Here is a 147-residue protein sequence, read N- to C-terminus: Large ribosomal subunit protein bL9 (147 aa).

The protein belongs to the bacterial ribosomal protein bL9 family.

Binds to the 23S rRNA. The polypeptide is Large ribosomal subunit protein bL9 (Mycoplasma capricolum subsp. capricolum (strain California kid / ATCC 27343 / NCTC 10154)).